Consider the following 133-residue polypeptide: Beta-synuclein (133 aa).

Repeat copies occupy residues 20–30 (EKTKQGVTEAA) and 31–41 (EKTKEGVLYVG). The interval 20 to 66 (EKTKQGVTEAAEKTKEGVLYVGSKTSGVVQGVASVAEKTKEQASHLG) is 4 X 11 AA tandem repeats of [EGS]-K-T-K-[EQ]-[GQ]-V-X(4). A 3; approximate repeat occupies 42 to 55 (SKTSGVVQGVASVA). Ser45 bears the Phosphoserine mark. Copy 4 of the repeat occupies 56-66 (EKTKEQASHLG). The interval 96-133 (EVAQEAAEEPLIEPLMEPEGESYEDSPQEEYQEYEPEA) is disordered. The span at 97–133 (VAQEAAEEPLIEPLMEPEGESYEDSPQEEYQEYEPEA) shows a compositional bias: acidic residues. Ser117 is subject to Phosphoserine; by BARK1, CK2 and GRK5.

The protein belongs to the synuclein family. In terms of processing, phosphorylated. Phosphorylation by G-protein coupled receptor kinases (GRK) is more efficient than phosphorylation by CK1, CK2 and CaM-kinase II. As to expression, highly expressed in the brain.

The protein localises to the cytoplasm. Its function is as follows. May be involved in neuronal plasticity. This is Beta-synuclein (Sncb) from Mus musculus (Mouse).